Consider the following 386-residue polypeptide: Succinate--CoA ligase [ADP-forming] subunit beta (386 aa).

The region spanning 9–244 (KEVLRKYGVA…LDEEDPKEIE (236 aa)) is the ATP-grasp domain. ATP is bound by residues Lys46, 53–55 (GRG), Glu99, Cys102, and Glu107. Residues Asn199 and Asp213 each coordinate Mg(2+). Substrate is bound by residues Asn264 and 321 to 323 (GIM).

Belongs to the succinate/malate CoA ligase beta subunit family. Heterotetramer of two alpha and two beta subunits. Mg(2+) serves as cofactor.

It carries out the reaction succinate + ATP + CoA = succinyl-CoA + ADP + phosphate. It catalyses the reaction GTP + succinate + CoA = succinyl-CoA + GDP + phosphate. The protein operates within carbohydrate metabolism; tricarboxylic acid cycle; succinate from succinyl-CoA (ligase route): step 1/1. Its function is as follows. Succinyl-CoA synthetase functions in the citric acid cycle (TCA), coupling the hydrolysis of succinyl-CoA to the synthesis of either ATP or GTP and thus represents the only step of substrate-level phosphorylation in the TCA. The beta subunit provides nucleotide specificity of the enzyme and binds the substrate succinate, while the binding sites for coenzyme A and phosphate are found in the alpha subunit. This chain is Succinate--CoA ligase [ADP-forming] subunit beta, found in Bacillus licheniformis (strain ATCC 14580 / DSM 13 / JCM 2505 / CCUG 7422 / NBRC 12200 / NCIMB 9375 / NCTC 10341 / NRRL NRS-1264 / Gibson 46).